The primary structure comprises 576 residues: MAGUK p55 subfamily member 7 (576 aa).

2 L27 domains span residues 10–64 (SEMG…EDCA) and 65–122 (PTPV…YDPE). The PDZ domain occupies 139–220 (IIRLVKNKEP…AITFKVVPGI (82 aa)). In terms of domain architecture, SH3 spans 228–298 (EPKMFIKALF…PSKHFQERRL (71 aa)). Positions 368–560 (HRLVVLVGPT…AFSELKQALK (193 aa)) constitute a Guanylate kinase-like domain.

It belongs to the MAGUK family.

It is found in the membrane. Its subcellular location is the cell junction. It localises to the tight junction. The protein resides in the adherens junction. In terms of biological role, acts as an important adapter that promotes epithelial cell polarity and tight junction formation. Involved in the assembly of protein complexes at sites of cell-cell contact. This is MAGUK p55 subfamily member 7 (mpp7) from Danio rerio (Zebrafish).